The chain runs to 76 residues: Toxin Acra III-2 (76 aa).

The region spanning 3-67 is the LCN-type CS-alpha/beta domain; that stretch reads VPGNYPLNTY…IWDAVKNHCT (65 aa). 3 disulfide bridges follow: cysteine 18–cysteine 41, cysteine 27–cysteine 46, and cysteine 31–cysteine 48.

This sequence belongs to the long (3 C-C) scorpion toxin superfamily. Sodium channel inhibitor family. Beta subfamily. In terms of tissue distribution, expressed by the venom gland.

It is found in the secreted. Its function is as follows. Binds to sodium channels (Nav) and affects the channel activation process. This is Toxin Acra III-2 from Androctonus crassicauda (Arabian fat-tailed scorpion).